The sequence spans 434 residues: Trigger factor (434 aa).

The PPIase FKBP-type domain maps to 161–246 (EDRVTIDFTG…LKKVEERELP (86 aa)).

The protein belongs to the FKBP-type PPIase family. Tig subfamily.

Its subcellular location is the cytoplasm. It catalyses the reaction [protein]-peptidylproline (omega=180) = [protein]-peptidylproline (omega=0). Involved in protein export. Acts as a chaperone by maintaining the newly synthesized protein in an open conformation. Functions as a peptidyl-prolyl cis-trans isomerase. This chain is Trigger factor, found in Pectobacterium carotovorum subsp. carotovorum (strain PC1).